The following is a 926-amino-acid chain: Serine/threonine-protein kinase/endoribonuclease IRE2 (926 aa).

The signal sequence occupies residues 1-34 (MASAVRGSRPWPRLGLQLQFAALLLGTLSPQVHT). Over 35 to 430 (LRPENLLLVS…TPDSYLGLGP (396 aa)) the chain is Lumenal. A helical membrane pass occupies residues 431–451 (QDLLAASLTAVLLGGWILFVM). The Cytoplasmic segment spans residues 452–926 (RQQQPQVVEK…RRPCPGATGR (475 aa)). The segment covering 478–501 (DAQSLHSGASRRSQKRLQSPSKQA) has biased composition (polar residues). The tract at residues 478 to 509 (DAQSLHSGASRRSQKRLQSPSKQAQPLDDPEA) is disordered. Positions 520-781 (FNPKDVLGRG…APQVLAHPFF (262 aa)) constitute a Protein kinase domain. ATP is bound by residues 526 to 534 (LGRGAGGTF) and lysine 548. Aspartate 637 functions as the Proton acceptor in the catalytic mechanism. The KEN domain maps to 784–912 (RAKQLQFFQD…ESLFLPYYPP (129 aa)).

It belongs to the protein kinase superfamily. Ser/Thr protein kinase family. Mg(2+) is required as a cofactor. Autophosphorylated.

It localises to the endoplasmic reticulum membrane. It catalyses the reaction L-seryl-[protein] + ATP = O-phospho-L-seryl-[protein] + ADP + H(+). The enzyme catalyses L-threonyl-[protein] + ATP = O-phospho-L-threonyl-[protein] + ADP + H(+). With respect to regulation, the kinase domain is activated by trans-autophosphorylation. Kinase activity is required for activation of the endoribonuclease domain. Functionally, induces translational repression through 28S ribosomal RNA cleavage in response to ER stress. Pro-apoptotic. Appears to play no role in the unfolded-protein response, unlike closely related proteins. The sequence is that of Serine/threonine-protein kinase/endoribonuclease IRE2 from Homo sapiens (Human).